The primary structure comprises 484 residues: Trigger factor (484 aa).

The PPIase FKBP-type domain occupies 162-243; the sequence is GDFISIDLSA…VKSVKERELP (82 aa). The segment at 427-484 is disordered; it reads DGNTIDTSEFFGKPPENDVTDLLDDDADGDAGVDADGDTENSAEPADADSADAAQGAG. The segment covering 444–476 has biased composition (acidic residues); the sequence is DVTDLLDDDADGDAGVDADGDTENSAEPADADS.

The protein belongs to the FKBP-type PPIase family. Tig subfamily.

It localises to the cytoplasm. It carries out the reaction [protein]-peptidylproline (omega=180) = [protein]-peptidylproline (omega=0). In terms of biological role, involved in protein export. Acts as a chaperone by maintaining the newly synthesized protein in an open conformation. Functions as a peptidyl-prolyl cis-trans isomerase. The chain is Trigger factor from Mycobacterium marinum (strain ATCC BAA-535 / M).